Reading from the N-terminus, the 122-residue chain is Small ribosomal subunit protein uS13 (122 aa).

The tract at residues 94–122 (LSLPVRGQRTKTNSRTRKGKRKTVAGKKK) is disordered. The span at 101 to 122 (QRTKTNSRTRKGKRKTVAGKKK) shows a compositional bias: basic residues.

It belongs to the universal ribosomal protein uS13 family. In terms of assembly, part of the 30S ribosomal subunit. Forms a loose heterodimer with protein S19. Forms two bridges to the 50S subunit in the 70S ribosome.

Its function is as follows. Located at the top of the head of the 30S subunit, it contacts several helices of the 16S rRNA. In the 70S ribosome it contacts the 23S rRNA (bridge B1a) and protein L5 of the 50S subunit (bridge B1b), connecting the 2 subunits; these bridges are implicated in subunit movement. Contacts the tRNAs in the A and P-sites. The protein is Small ribosomal subunit protein uS13 of Chlamydia muridarum (strain MoPn / Nigg).